Here is a 147-residue protein sequence, read N- to C-terminus: Large ribosomal subunit protein bL9 (147 aa).

The protein belongs to the bacterial ribosomal protein bL9 family.

Its function is as follows. Binds to the 23S rRNA. In Thermoanaerobacter pseudethanolicus (strain ATCC 33223 / 39E) (Clostridium thermohydrosulfuricum), this protein is Large ribosomal subunit protein bL9.